The primary structure comprises 501 residues: Isoflavone 3'-hydroxylase (501 aa).

The helical transmembrane segment at 7–24 (LLSLSFIITIKILLKITS) threads the bilayer. Residue C439 participates in heme binding.

This sequence belongs to the cytochrome P450 family. The cofactor is heme. As to expression, expressed constitutively in leaves and stems, but not in roots.

It is found in the endoplasmic reticulum membrane. It carries out the reaction formononetin + reduced [NADPH--hemoprotein reductase] + O2 = calycosin + oxidized [NADPH--hemoprotein reductase] + H2O + H(+). Functionally, involved in the biosynthesis of the pterocarpin phytoalexins. Acts on isoflavones with a 4'-methoxy group on the B-ring, such as biochanin A, formononetin and 2'-hydroxyformononetin. Has a low activity with daidzein and pseudobaptigenin, and no activity with the 7-O-methylated isoflavonoids isoformononetin and prunetin. The sequence is that of Isoflavone 3'-hydroxylase from Medicago truncatula (Barrel medic).